We begin with the raw amino-acid sequence, 76 residues long: RNA-binding protein KhpA (76 aa).

One can recognise a KH domain in the interval 29 to 76 (SLHIELSVHPDDMGKVIGKQGRTAKALRSVVYAAATKQKRRVRLDIID).

Belongs to the KhpA RNA-binding protein family. As to quaternary structure, forms a complex with KhpB.

The protein resides in the cytoplasm. Its function is as follows. A probable RNA chaperone. Forms a complex with KhpB which binds to cellular RNA and controls its expression. Plays a role in peptidoglycan (PG) homeostasis and cell length regulation. This chain is RNA-binding protein KhpA, found in Halalkalibacterium halodurans (strain ATCC BAA-125 / DSM 18197 / FERM 7344 / JCM 9153 / C-125) (Bacillus halodurans).